Here is a 68-residue protein sequence, read N- to C-terminus: Putative alpha-conotoxin Qc alphaL-1 (68 aa).

The signal sequence occupies residues 1-21 (MGMRMMFTMFLLVVLATTVVS). A propeptide spanning residues 22–49 (INLDHAFDGRNAAANNKATDLMARTVRR) is cleaved from the precursor. A disulfide bridge connects residues Cys-51 and Cys-64.

This sequence belongs to the conotoxin A superfamily. As to expression, expressed by the venom duct.

It localises to the secreted. Functionally, alpha-conotoxins act on postsynaptic membranes, they bind to the nicotinic acetylcholine receptors (nAChR) and thus inhibit them. The protein is Putative alpha-conotoxin Qc alphaL-1 of Conus quercinus (Oak cone).